The sequence spans 124 residues: Insulin growth factor-like family member 4 (124 aa).

An N-terminal signal peptide occupies residues 1-19 (MVPRISAAIFIFELLGSNS). 2 N-linked (GlcNAc...) asparagine glycosylation sites follow: Asn57 and Asn84.

It belongs to the IGFL family. As to expression, detected in the cerebellum.

Its subcellular location is the secreted. The protein is Insulin growth factor-like family member 4 (IGFL4) of Homo sapiens (Human).